The chain runs to 728 residues: Phosphoribosylformylglycinamidine synthase subunit PurL (728 aa).

Residue histidine 40 is part of the active site. 2 residues coordinate ATP: tyrosine 43 and lysine 82. Glutamate 84 contributes to the Mg(2+) binding site. Substrate contacts are provided by residues 85–88 (SHNH) and arginine 107. The active-site Proton acceptor is the histidine 86. Aspartate 108 lines the Mg(2+) pocket. Substrate is bound at residue glutamine 231. Aspartate 259 contributes to the Mg(2+) binding site. 303-305 (ESQ) contacts substrate. Residues asparagine 483 and glycine 520 each contribute to the ATP site. Asparagine 521 is a binding site for Mg(2+). Serine 523 contacts substrate.

The protein belongs to the FGAMS family. In terms of assembly, monomer. Part of the FGAM synthase complex composed of 1 PurL, 1 PurQ and 2 PurS subunits.

It localises to the cytoplasm. The catalysed reaction is N(2)-formyl-N(1)-(5-phospho-beta-D-ribosyl)glycinamide + L-glutamine + ATP + H2O = 2-formamido-N(1)-(5-O-phospho-beta-D-ribosyl)acetamidine + L-glutamate + ADP + phosphate + H(+). The protein operates within purine metabolism; IMP biosynthesis via de novo pathway; 5-amino-1-(5-phospho-D-ribosyl)imidazole from N(2)-formyl-N(1)-(5-phospho-D-ribosyl)glycinamide: step 1/2. In terms of biological role, part of the phosphoribosylformylglycinamidine synthase complex involved in the purines biosynthetic pathway. Catalyzes the ATP-dependent conversion of formylglycinamide ribonucleotide (FGAR) and glutamine to yield formylglycinamidine ribonucleotide (FGAM) and glutamate. The FGAM synthase complex is composed of three subunits. PurQ produces an ammonia molecule by converting glutamine to glutamate. PurL transfers the ammonia molecule to FGAR to form FGAM in an ATP-dependent manner. PurS interacts with PurQ and PurL and is thought to assist in the transfer of the ammonia molecule from PurQ to PurL. This Carboxydothermus hydrogenoformans (strain ATCC BAA-161 / DSM 6008 / Z-2901) protein is Phosphoribosylformylglycinamidine synthase subunit PurL.